A 634-amino-acid polypeptide reads, in one-letter code: Kinesin-like protein KIF22 (634 aa).

In terms of domain architecture, Kinesin motor spans 19–345 (RVRVAVRLRP…LNFAAKSKQI (327 aa)). 103–110 (GPTGAGKT) provides a ligand contact to ATP. The tract at residues 357–406 (APTIAPGKRTREEQEAGGSGEPQNKRSKEGKKAEHSPSPPLHPQSSPDSS) is disordered. The span at 379 to 391 (QNKRSKEGKKAEH) shows a compositional bias: basic and acidic residues. Positions 421-471 (SAERERLNLLKTVAQSRKEIQMLKEKQKELEDKANMFNKQKETTEKESKDA) form a coiled coil.

It belongs to the TRAFAC class myosin-kinesin ATPase superfamily. Kinesin family. Ubiquitinated, leading to its subsequent proteasomal degradation.

The protein localises to the nucleus. Its subcellular location is the cytoplasm. The protein resides in the cytoskeleton. Functionally, kinesin family member that is involved in spindle formation and the movements of chromosomes during mitosis and meiosis. Binds to microtubules and to DNA. The sequence is that of Kinesin-like protein KIF22 (kif22) from Danio rerio (Zebrafish).